The following is a 351-amino-acid chain: Methylthioribose-1-phosphate isomerase (351 aa).

Substrate-binding positions include 51–53 (RGA), Arg-94, and Gln-199. Asp-240 acts as the Proton donor in catalysis. 250-251 (NK) lines the substrate pocket.

Belongs to the eIF-2B alpha/beta/delta subunits family. MtnA subfamily. As to quaternary structure, homodimer.

It catalyses the reaction 5-(methylsulfanyl)-alpha-D-ribose 1-phosphate = 5-(methylsulfanyl)-D-ribulose 1-phosphate. It functions in the pathway amino-acid biosynthesis; L-methionine biosynthesis via salvage pathway; L-methionine from S-methyl-5-thio-alpha-D-ribose 1-phosphate: step 1/6. Functionally, catalyzes the interconversion of methylthioribose-1-phosphate (MTR-1-P) into methylthioribulose-1-phosphate (MTRu-1-P). This chain is Methylthioribose-1-phosphate isomerase, found in Bacillus cereus (strain ATCC 10987 / NRS 248).